The chain runs to 1388 residues: Endoribonuclease Dicer homolog 2 (1388 aa).

Positions 31-210 (ALEKAIKQNT…DSYWKKIHEL (180 aa)) constitute a Helicase ATP-binding domain. Residue 44-51 (LETGSGKT) coordinates ATP. Positions 152-155 (DECH) match the DECH box motif. The Helicase C-terminal domain maps to 380–544 (LGYSSLENIR…PLPDDSDEPL (165 aa)). One can recognise a Dicer dsRNA-binding fold domain in the interval 559-645 (SVSLIYHYCS…VPDMVVAETV (87 aa)). The PAZ domain maps to 805-935 (TSHEVLEKHE…LPPELCHVIL (131 aa)). RNase III domains follow at residues 962–1113 (AYNL…SEGG) and 1149–1296 (VGYM…VDSG). Mg(2+) contacts are provided by E1188, D1282, and E1285. In terms of domain architecture, DRBM spans 1315-1384 (TPETVKLHPV…YKEVLNLLKN (70 aa)).

Belongs to the helicase family. Dicer subfamily. It depends on Mg(2+) as a cofactor. The cofactor is Mn(2+).

The protein resides in the nucleus. It is found in the cytoplasm. In terms of biological role, ribonuclease (RNase) III involved in RNA-mediated post-transcriptional gene silencing (PTGS). Involved in the processing of natural small interfering RNAs (nat-siRNAs, derived from cis-natural antisense transcripts) by cleaving small dsRNAs into 24 nucleotide nat-siRNAs. Plays an essential role in transitive silencing of transgenes by processing secondary siRNAs. This pathway, which requires DCL4 and RDR6, amplifies silencing by using the target RNA as substrate to generate secondary siRNAs, providing an efficient mechanism for long-distance silencing. May participate with DCL3 in the production of 24 nucleotide repeat-associated siRNAs (ra-siRNAs) which derive from heterochromatin and DNA repeats such as transposons. Plays a role in antiviral RNA silencing. Involved in the production of viral siRNAs derived from the turnip crinkle virus (TCV) and tobacco rattle virus (TRV). Targeted by the viral silencing suppressor (VSR) protein 2b of the cucumber mosaic virus (CMV) that inactivates DCL2 function in RNA silencing. Does not seem to be involved in microRNAs (miRNAs) processing. The polypeptide is Endoribonuclease Dicer homolog 2 (Arabidopsis thaliana (Mouse-ear cress)).